The following is a 549-amino-acid chain: Guanine nucleotide-binding protein-like 3 (549 aa).

A compositionally biased stretch (basic residues) spans 1 to 45 (MKRPKLKKASKRMTCHKRYKIQKKVREHHRKLRKEAKKRGHKKPR). Disordered stretches follow at residues 1–56 (MKRP…SAPF) and 73–104 (ELKQ…SNVE). The segment at 2–46 (KRPKLKKASKRMTCHKRYKIQKKVREHHRKLRKEAKKRGHKKPRK) is basic. The stretch at 56-95 (FKEALLREAELRKQRLEELKQQQKLDRQKELEKKRKLETN) forms a coiled coil. The segment covering 73-96 (ELKQQQKLDRQKELEKKRKLETNP) has biased composition (basic and acidic residues). At lysine 79 the chain carries N6-acetyllysine. Residues lysine 91 and lysine 99 each participate in a glycyl lysine isopeptide (Lys-Gly) (interchain with G-Cter in SUMO2) cross-link. Residue serine 101 is modified to Phosphoserine. Glycyl lysine isopeptide (Lys-Gly) (interchain with G-Cter in SUMO2) cross-links involve residues lysine 114, lysine 179, lysine 196, lysine 253, lysine 267, and lysine 275. The 182-residue stretch at 131-312 (CQELKKVIEA…IIDSPSFIVS (182 aa)) folds into the CP-type G domain. 178 to 181 (NKSD) is a GTP binding site. Residue 261 to 268 (GFPNVGKS) participates in GTP binding. The segment at 282 to 456 (VGVSMGLTRS…HLANSILFQS (175 aa)) is intermediate. 305–308 (DSPS) lines the GTP pocket. An acidic region spans residues 465–543 (EEKDIHEELP…KIIEEDDAYD (79 aa)). Residues 474 to 483 (PKRKERKQEE) show a composition bias toward basic and acidic residues. The tract at residues 474–532 (PKRKERKQEEREDDKDSDQETVDEEVDENSSGMFAAEETGEALSEETTAGEQSTRSFIL) is disordered. Residues 484 to 501 (REDDKDSDQETVDEEVDE) are compositionally biased toward acidic residues. A phosphoserine mark is found at serine 490, serine 504, serine 517, and serine 529. Polar residues predominate over residues 518 to 529 (EETTAGEQSTRS).

Belongs to the TRAFAC class YlqF/YawG GTPase family. Interacts with MDM2; this interaction stabilizes MDM2. Interaction with MDM2 occurs in the nucleoplasm and is triggered by a nucleolar release mechanism, such as mitosis-induced nucleolar disassembly. Indirectly interacts with TP53, via MDM2-binding. Interacts with TSC22D1 isoform 2. As to expression, increased levels in lung tissue in cancer patients.

The protein resides in the nucleus. The protein localises to the nucleolus. Its function is as follows. May be required to maintain the proliferative capacity of stem cells. Stabilizes MDM2 by preventing its ubiquitination, and hence proteasomal degradation. The sequence is that of Guanine nucleotide-binding protein-like 3 (GNL3) from Homo sapiens (Human).